Reading from the N-terminus, the 1044-residue chain is Outer dynein arm-docking complex subunit 2 (1044 aa).

2 stretches are compositionally biased toward basic and acidic residues: residues 317-338 (IKFSEQPQKDQPNEAPKEEVAI) and 379-401 (SKDRNTLRDTQVEKHGGKLEKSR). Disordered regions lie at residues 317–409 (IKFS…PGRA) and 423–446 (ISDSSSESEEDEEQPDHRQEANAD). 5 HEAT repeats span residues 448-485 (PSEYWQIQKLVKYLKGGNQTATVIALCSMKDFNLAQET), 487-527 (QLAI…NPQI), 530-568 (NIVDLGGLPVMVNILDSPHKSLKCLAAETIANVAKFRRA), 627-665 (AIRKAGGIPLLARLLKTSHENMLIPVVGTLQECASEENY), and 668-706 (AIKAERIIENLVKNLNSENEQLQEHCAMAIYQCAEDEET). 11 ARM repeats span residues 484 to 523 (ETCQLAIRDVGGLEVLINLLETDEVKCKIGSLKILKEISH), 525 to 564 (PQIRRNIVDLGGLPVMVNILDSPHKSLKCLAAETIANVAK), 535 to 577 (GGLP…RHGG), 622 to 661 (YANKEAIRKAGGIPLLARLLKTSHENMLIPVVGTLQECAS), 663 to 702 (ENYRAAIKAERIIENLVKNLNSENEQLQEHCAMAIYQCAE), 746 to 785 (KENVTKFREYKAIETLVGLLTDQPEEVLVNVVGALGECCQ), 828 to 867 (PESMMIIDRLDGVRLLWSLLKNPHPDVKASAAWALCPCIQ), 871 to 910 (DAGEMVRSFVGGLELVVNLLKSDNKEVLASVCAVITNIAK), 912 to 951 (QENLAVITDHGVVPLLSKLANTNNDKLRRHLAETISRCCM), 953 to 992 (GRNRVAFGEHKAVAPLVRYLKSNDTNVHRATAQALYQLSE), and 1004 to 1031 (GAVKLLLDMVGSPDEELQEAAAGCISNI). 5 HEAT repeats span residues 831-870 (MMIIDRLDGVRLLWSLLKNPHPDVKASAAWALCPCIQNAK), 874-914 (EMVR…DQEN), 916-955 (AVITDHGVVPLLSKLANTNNDKLRRHLAETISRCCMWGRN), 958-996 (AFGEHKAVAPLVRYLKSNDTNVHRATAQALYQLSEDADN), and 999-1037 (TMHENGAVKLLLDMVGSPDEELQEAAAGCISNIRRLALA).

Component of the outer dynein arm-docking complex along with ODAD1, ODAD3, ODAD4 and CLXN. Interacts with CFAP61. In terms of tissue distribution, expressed in trachea multiciliated cells.

It is found in the cytoplasm. The protein localises to the cytoskeleton. It localises to the cilium axoneme. The protein resides in the cilium basal body. Component of the outer dynein arm-docking complex (ODA-DC) that mediates outer dynein arms (ODA) binding onto the doublet microtubule. Involved in mediating assembly of both ODAs and their axonemal docking complex onto ciliary microtubules. The protein is Outer dynein arm-docking complex subunit 2 (ODAD2) of Bos taurus (Bovine).